Reading from the N-terminus, the 382-residue chain is Bifunctional enzyme IspD/IspF (382 aa).

The interval 1–225 (MTFSVVIVAA…EHLAGVARVT (225 aa)) is 2-C-methyl-D-erythritol 4-phosphate cytidylyltransferase. A 2-C-methyl-D-erythritol 2,4-cyclodiphosphate synthase region spans residues 226–382 (RVGQGFDAHR…SAVVAVETPA (157 aa)). A divalent metal cation-binding residues include aspartate 232 and histidine 234. Residues 232–234 (DAH) and 258–259 (HS) each bind 4-CDP-2-C-methyl-D-erythritol 2-phosphate. Histidine 266 lines the a divalent metal cation pocket. Residues 280–282 (DIG), 356–359 (TTTE), phenylalanine 363, and arginine 366 each bind 4-CDP-2-C-methyl-D-erythritol 2-phosphate.

This sequence in the N-terminal section; belongs to the IspD/TarI cytidylyltransferase family. IspD subfamily. The protein in the C-terminal section; belongs to the IspF family. It depends on a divalent metal cation as a cofactor.

The catalysed reaction is 2-C-methyl-D-erythritol 4-phosphate + CTP + H(+) = 4-CDP-2-C-methyl-D-erythritol + diphosphate. It catalyses the reaction 4-CDP-2-C-methyl-D-erythritol 2-phosphate = 2-C-methyl-D-erythritol 2,4-cyclic diphosphate + CMP. Its pathway is isoprenoid biosynthesis; isopentenyl diphosphate biosynthesis via DXP pathway; isopentenyl diphosphate from 1-deoxy-D-xylulose 5-phosphate: step 2/6. The protein operates within isoprenoid biosynthesis; isopentenyl diphosphate biosynthesis via DXP pathway; isopentenyl diphosphate from 1-deoxy-D-xylulose 5-phosphate: step 4/6. Functionally, bifunctional enzyme that catalyzes the formation of 4-diphosphocytidyl-2-C-methyl-D-erythritol from CTP and 2-C-methyl-D-erythritol 4-phosphate (MEP) (IspD), and catalyzes the conversion of 4-diphosphocytidyl-2-C-methyl-D-erythritol 2-phosphate (CDP-ME2P) to 2-C-methyl-D-erythritol 2,4-cyclodiphosphate (ME-CPP) with a corresponding release of cytidine 5-monophosphate (CMP) (IspF). This chain is Bifunctional enzyme IspD/IspF, found in Caulobacter vibrioides (strain ATCC 19089 / CIP 103742 / CB 15) (Caulobacter crescentus).